Here is a 202-residue protein sequence, read N- to C-terminus: Snake venom metalloproteinase leucurolysin-A (202 aa).

Gln-1 carries the pyrrolidone carboxylic acid modification. Residues 6–202 (RYIELVVVAD…HNPQCILNKP (197 aa)) form the Peptidase M12B domain. Glu-9 and Asp-93 together coordinate Ca(2+). 3 disulfides stabilise this stretch: Cys-117–Cys-197, Cys-157–Cys-181, and Cys-159–Cys-164. Residue His-142 participates in Zn(2+) binding. The active site involves Glu-143. Zn(2+) is bound by residues His-146 and His-152. Cys-197 and Asn-200 together coordinate Ca(2+).

The protein belongs to the venom metalloproteinase (M12B) family. P-I subfamily. In terms of assembly, monomer. Requires Zn(2+) as cofactor. As to expression, expressed by the venom gland.

It is found in the secreted. With respect to regulation, inhibited by EDTA and 2-mercaptoethanol. Inhibited by 1 mM zinc ion and to a lesser extent by 1 mM calcium ion. Non-hemorrhagic metalloproteinase that hydrolyzes the alpha chains of fibrinogen, as well as fibrin, fibronectin and casein. Beta and gamma chains are also hydrolyzed, but more slowly. Thrombolytic activity is also observed. Induces detachment of endothelial cells followed by death, and inhibits endothelial cell adhesion to fibronectin. Induces edema in mouse paw. Inhibits ADP-induced platelet aggregation on human platelet-rich plasma with an IC(50) of 2.8 uM. The polypeptide is Snake venom metalloproteinase leucurolysin-A (Bothrops leucurus (Whitetail lancehead)).